The sequence spans 65 residues: Large ribosomal subunit protein uL29 (65 aa).

Belongs to the universal ribosomal protein uL29 family.

This chain is Large ribosomal subunit protein uL29, found in Xylella fastidiosa (strain Temecula1 / ATCC 700964).